Consider the following 152-residue polypeptide: uncharacterized protein (152 aa).

One can recognise a VOC domain in the interval 7 to 133; that stretch reads PALSPHLVVD…FGHHWSLGQP (127 aa).

This is an uncharacterized protein from Mycobacterium bovis (strain ATCC BAA-935 / AF2122/97).